Consider the following 498-residue polypeptide: Glycerol kinase (498 aa).

Position 12 (T12) interacts with ADP. 3 residues coordinate ATP: T12, T13, and S14. T12 contacts sn-glycerol 3-phosphate. Residue R16 participates in ADP binding. Sn-glycerol 3-phosphate is bound by residues R82, E83, and Y134. Glycerol-binding residues include R82, E83, and Y134. Phosphohistidine; by HPr is present on H230. D244 provides a ligand contact to sn-glycerol 3-phosphate. The glycerol site is built by D244 and Q245. Residues T266 and G309 each contribute to the ADP site. ATP contacts are provided by T266, G309, Q313, and G410. G410 and N414 together coordinate ADP.

This sequence belongs to the FGGY kinase family. As to quaternary structure, homotetramer and homodimer (in equilibrium). In terms of processing, the phosphoenolpyruvate-dependent sugar phosphotransferase system (PTS), including enzyme I, and histidine-containing protein (HPr) are required for the phosphorylation, which leads to the activation of the enzyme.

The enzyme catalyses glycerol + ATP = sn-glycerol 3-phosphate + ADP + H(+). It participates in polyol metabolism; glycerol degradation via glycerol kinase pathway; sn-glycerol 3-phosphate from glycerol: step 1/1. Its activity is regulated as follows. Activated by phosphorylation and inhibited by fructose 1,6-bisphosphate (FBP). In terms of biological role, key enzyme in the regulation of glycerol uptake and metabolism. Catalyzes the phosphorylation of glycerol to yield sn-glycerol 3-phosphate. This is Glycerol kinase from Staphylococcus aureus (strain bovine RF122 / ET3-1).